The sequence spans 276 residues: Elongation factor Ts (276 aa).

Residues 80 to 83 are involved in Mg(2+) ion dislocation from EF-Tu; the sequence is TDFV.

Belongs to the EF-Ts family.

The protein localises to the cytoplasm. Its function is as follows. Associates with the EF-Tu.GDP complex and induces the exchange of GDP to GTP. It remains bound to the aminoacyl-tRNA.EF-Tu.GTP complex up to the GTP hydrolysis stage on the ribosome. The polypeptide is Elongation factor Ts (Kocuria rhizophila (strain ATCC 9341 / DSM 348 / NBRC 103217 / DC2201)).